The chain runs to 517 residues: DNA primase DnaG (517 aa).

The Toprim domain maps to 171–257 (DAIIILEGRA…CVEDLVQKEV (87 aa)). The Mg(2+) site is built by Glu-177, Asp-219, and Asp-221.

It belongs to the archaeal DnaG primase family. As to quaternary structure, forms a ternary complex with MCM helicase and DNA. Component of the archaeal exosome complex. Requires Mg(2+) as cofactor.

It catalyses the reaction ssDNA + n NTP = ssDNA/pppN(pN)n-1 hybrid + (n-1) diphosphate.. RNA polymerase that catalyzes the synthesis of short RNA molecules used as primers for DNA polymerase during DNA replication. Also part of the exosome, which is a complex involved in RNA degradation. Acts as a poly(A)-binding protein that enhances the interaction between heteromeric, adenine-rich transcripts and the exosome. This Methanosarcina barkeri (strain Fusaro / DSM 804) protein is DNA primase DnaG.